The sequence spans 863 residues: Leucine--tRNA ligase (863 aa).

The 'HIGH' region motif lies at 42–52 (PYPSGRLHMGH). Positions 622–626 (KMSKS) match the 'KMSKS' region motif. Lysine 625 is a binding site for ATP.

It belongs to the class-I aminoacyl-tRNA synthetase family.

The protein localises to the cytoplasm. It catalyses the reaction tRNA(Leu) + L-leucine + ATP = L-leucyl-tRNA(Leu) + AMP + diphosphate. In Shewanella denitrificans (strain OS217 / ATCC BAA-1090 / DSM 15013), this protein is Leucine--tRNA ligase.